A 257-amino-acid polypeptide reads, in one-letter code: Myosin-8 (257 aa).

Positions 1 to 257 (RAALQAEIEE…REVHTKISAE (257 aa)) form a coiled coil. Residues Ser-33, Ser-45, and Ser-58 each carry the phosphoserine modification.

In terms of assembly, muscle myosin is a hexameric protein that consists of 2 heavy chain subunits (MHC), 2 alkali light chain subunits (MLC) and 2 regulatory light chain subunits (MLC-2).

Its subcellular location is the cytoplasm. The protein localises to the myofibril. Functionally, muscle contraction. The sequence is that of Myosin-8 (Myh8) from Rattus norvegicus (Rat).